A 361-amino-acid polypeptide reads, in one-letter code: Putative agmatine deiminase (361 aa).

C354 (amidino-cysteine intermediate) is an active-site residue.

Belongs to the agmatine deiminase family.

The enzyme catalyses agmatine + H2O = N-carbamoylputrescine + NH4(+). The protein is Putative agmatine deiminase of Streptococcus pneumoniae (strain ATCC 700669 / Spain 23F-1).